A 237-amino-acid chain; its full sequence is Putative N-acetylmannosamine-6-phosphate 2-epimerase (237 aa).

It belongs to the NanE family.

The catalysed reaction is an N-acyl-D-glucosamine 6-phosphate = an N-acyl-D-mannosamine 6-phosphate. It participates in amino-sugar metabolism; N-acetylneuraminate degradation; D-fructose 6-phosphate from N-acetylneuraminate: step 3/5. In terms of biological role, converts N-acetylmannosamine-6-phosphate (ManNAc-6-P) to N-acetylglucosamine-6-phosphate (GlcNAc-6-P). The polypeptide is Putative N-acetylmannosamine-6-phosphate 2-epimerase (Caldanaerobacter subterraneus subsp. tengcongensis (strain DSM 15242 / JCM 11007 / NBRC 100824 / MB4) (Thermoanaerobacter tengcongensis)).